Consider the following 308-residue polypeptide: tRNA dimethylallyltransferase (308 aa).

Position 9–16 (9–16 (GPTAVGKT)) interacts with ATP. 11–16 (TAVGKT) contributes to the substrate binding site. The interaction with substrate tRNA stretch occupies residues 34-37 (DSMQ).

This sequence belongs to the IPP transferase family. As to quaternary structure, monomer. The cofactor is Mg(2+).

It catalyses the reaction adenosine(37) in tRNA + dimethylallyl diphosphate = N(6)-dimethylallyladenosine(37) in tRNA + diphosphate. In terms of biological role, catalyzes the transfer of a dimethylallyl group onto the adenine at position 37 in tRNAs that read codons beginning with uridine, leading to the formation of N6-(dimethylallyl)adenosine (i(6)A). The protein is tRNA dimethylallyltransferase of Lactobacillus delbrueckii subsp. bulgaricus (strain ATCC BAA-365 / Lb-18).